Here is a 185-residue protein sequence, read N- to C-terminus: Protein GrpE (185 aa).

The segment covering 1–11 has biased composition (polar residues); it reads MENTQENPTDQ. The disordered stretch occupies residues 1–38; it reads MENTQENPTDQTTEETGREAQAAEPAAQAAENAAPAAE. Residues 19-38 are compositionally biased toward low complexity; the sequence is EAQAAEPAAQAAENAAPAAE.

This sequence belongs to the GrpE family. Homodimer.

It localises to the cytoplasm. Its function is as follows. Participates actively in the response to hyperosmotic and heat shock by preventing the aggregation of stress-denatured proteins, in association with DnaK and GrpE. It is the nucleotide exchange factor for DnaK and may function as a thermosensor. Unfolded proteins bind initially to DnaJ; upon interaction with the DnaJ-bound protein, DnaK hydrolyzes its bound ATP, resulting in the formation of a stable complex. GrpE releases ADP from DnaK; ATP binding to DnaK triggers the release of the substrate protein, thus completing the reaction cycle. Several rounds of ATP-dependent interactions between DnaJ, DnaK and GrpE are required for fully efficient folding. This is Protein GrpE from Burkholderia mallei (strain NCTC 10247).